A 358-amino-acid chain; its full sequence is Peptide chain release factor 1 (358 aa).

N5-methylglutamine is present on Gln235.

It belongs to the prokaryotic/mitochondrial release factor family. Post-translationally, methylated by PrmC. Methylation increases the termination efficiency of RF1.

It is found in the cytoplasm. Functionally, peptide chain release factor 1 directs the termination of translation in response to the peptide chain termination codons UAG and UAA. The polypeptide is Peptide chain release factor 1 (Neisseria meningitidis serogroup B (strain ATCC BAA-335 / MC58)).